Here is a 555-residue protein sequence, read N- to C-terminus: Glutamine--tRNA ligase (555 aa).

Residues 35-45 carry the 'HIGH' region motif; the sequence is PEPNGYLHIGH. ATP is bound by residues 36–38 and 42–48; these read EPN and HIGHAKS. 2 residues coordinate L-glutamine: D68 and Y213. Residues T232 and 262 to 263 contribute to the ATP site; that span reads RL. The short motif at 269–273 is the 'KMSKS' region element; sequence ITSKR.

It belongs to the class-I aminoacyl-tRNA synthetase family. In terms of assembly, monomer.

It is found in the cytoplasm. The enzyme catalyses tRNA(Gln) + L-glutamine + ATP = L-glutaminyl-tRNA(Gln) + AMP + diphosphate. The polypeptide is Glutamine--tRNA ligase (Ectopseudomonas mendocina (strain ymp) (Pseudomonas mendocina)).